A 72-amino-acid chain; its full sequence is Probable movement protein p8 (72 aa).

The disordered stretch occupies residues 16–58 (GRARSVEGKKHNGSGLTGVKRHAVSETSQKSQQGTGNGTMTNI). Positions 40–58 (SETSQKSQQGTGNGTMTNI) are enriched in polar residues.

Belongs to the carmovirus/necrovirus/panicovirus movement protein p8 family.

Cell-to-cell movement. The polypeptide is Probable movement protein p8 (Tobacco necrosis virus (strain A) (TNV-A)).